The sequence spans 147 residues: Myosin-ID light chain (147 aa).

EF-hand domains follow at residues 8-43, 79-114, and 115-147; these read EAQS…LGQN, FDEK…LGER, and LPEE…MLKK. Residues aspartate 21, asparagine 23, aspartate 25, lysine 27, and glutamate 32 each coordinate Ca(2+).

As to quaternary structure, myosin I is a dimer of a heavy and a light chain. Inability to self-assemble into filaments. Interacts with myoD. Does not interact with myoB or myoC.

It is found in the cytoplasm. Functions as the light chain for myosin-D. Has low affinity for calcium. The chain is Myosin-ID light chain (mlcD) from Dictyostelium discoideum (Social amoeba).